Reading from the N-terminus, the 561-residue chain is MALPPSGETQSQDKANYLPQSNPHHLTTYYAHAPGYSHFRNLATTEEEFQPWKLAAAVLESQAMAPLDAFRMTAPLLNPGLAVQSEPLYNLPWYKLSPWNRIPQFTPEVPRFLDSTEHRSSGSSNQNLVLGGGGGQISGQRWEAENLLLPSPVIASLLPDGIKSSQSISVPQTLNQEGKLPFCGFNFTEEELSFVLYGAIASPEHPTDLQHAISGILVPTESSGSNHLHKTLDKDSLQLPEGLCLMQTSFGDVPHFGVFCSDFIAKGVRFGPFRGRVVNASEVKAHRDNSRMWEIFEDGHLSHFIDGKGSGNWMSYVNCARFPKEQNLLAVQHQGQIFYESCRDIQRNQELLVWYGNGYEKFLGVPMNLRVTEQGGQQLSESSEESAEGYRCERCGKVFTYKYYRDKHLKYTPCVDKGDRKFPCSLCQRSFEKRDRLRIHILHVHERHRPYLCSTCGKSFSQSSSLNKHMRVHSGDRPYQCVYCTKKFTASSILRTHIRQHSGEKPFKCKHCGKAFASHAAHDSHVRRSHKDNGRSSCDICGKGFLDQEAFYAHMRLHKTC.

A disordered region spans residues 1 to 20 (MALPPSGETQSQDKANYLPQ). Residues 7–20 (GETQSQDKANYLPQ) show a composition bias toward polar residues. An interaction with CBFA2T2 region spans residues 184 to 373 (GFNFTEEELS…GVPMNLRVTE (190 aa)). In terms of domain architecture, SET spans 241-356 (EGLCLMQTSF…RNQELLVWYG (116 aa)). Y355 serves as a coordination point for S-adenosyl-L-methionine. The C2H2-type 1; atypical zinc finger occupies 390 to 416 (YRCERCGKVFTYKYYRDKHLKYTPCVD). 5 consecutive C2H2-type zinc fingers follow at residues 422-445 (FPCS…LHVH), 451-473 (YLCS…MRVH), 479-501 (YQCV…IRQH), 507-530 (FKCK…RRSH), and 536-558 (SSCD…MRLH).

This sequence belongs to the class V-like SAM-binding methyltransferase superfamily. Interacts with CBFA2T2. In terms of tissue distribution, restricted to embryonic stem cells and primordial germ cells. Not detected in epiblast-derived stem cells.

The protein localises to the nucleus. Transcription factor that has both positive and negative roles on transcription. Plays a role in cellular pluripotency. Essential for germ cell development at 2 levels: the reacquisition of potential pluripotency, including SOX2 up-regulation, and successful epigenetic reprogramming, characterized by EHMT1 repression. Its association with CBFA2T2 is required for the functions in pluripotency and germ cell formation. The sequence is that of PR domain zinc finger protein 14 (Prdm14) from Mus musculus (Mouse).